The following is a 185-amino-acid chain: Large ribosomal subunit protein uL6 (185 aa).

It belongs to the universal ribosomal protein uL6 family. Part of the 50S ribosomal subunit.

In terms of biological role, this protein binds to the 23S rRNA, and is important in its secondary structure. It is located near the subunit interface in the base of the L7/L12 stalk, and near the tRNA binding site of the peptidyltransferase center. The protein is Large ribosomal subunit protein uL6 of Deinococcus deserti (strain DSM 17065 / CIP 109153 / LMG 22923 / VCD115).